Consider the following 88-residue polypeptide: UPF0223 protein BH2638 (88 aa).

The protein belongs to the UPF0223 family.

The sequence is that of UPF0223 protein BH2638 from Halalkalibacterium halodurans (strain ATCC BAA-125 / DSM 18197 / FERM 7344 / JCM 9153 / C-125) (Bacillus halodurans).